A 560-amino-acid chain; its full sequence is DNA ligase B (560 aa).

Lys128 (N6-AMP-lysine intermediate) is an active-site residue.

It belongs to the NAD-dependent DNA ligase family. LigB subfamily.

It catalyses the reaction NAD(+) + (deoxyribonucleotide)n-3'-hydroxyl + 5'-phospho-(deoxyribonucleotide)m = (deoxyribonucleotide)n+m + AMP + beta-nicotinamide D-nucleotide.. Functionally, catalyzes the formation of phosphodiester linkages between 5'-phosphoryl and 3'-hydroxyl groups in double-stranded DNA using NAD as a coenzyme and as the energy source for the reaction. The protein is DNA ligase B of Azotobacter vinelandii (strain DJ / ATCC BAA-1303).